A 457-amino-acid chain; its full sequence is tRNA-2-methylthio-N(6)-dimethylallyladenosine synthase (457 aa).

The region spanning 3–120 is the MTTase N-terminal domain; that stretch reads KKVYVKTFGC…LPQMIDARRE (118 aa). C12, C49, C83, C157, C161, and C164 together coordinate [4Fe-4S] cluster. The Radical SAM core domain occupies 143-377; sequence RVEGPSAFVS…QATIEENVAR (235 aa). The TRAM domain maps to 380–447; sequence QSMVGKVERI…PHSLRGELVL (68 aa).

It belongs to the methylthiotransferase family. MiaB subfamily. In terms of assembly, monomer. The cofactor is [4Fe-4S] cluster.

Its subcellular location is the cytoplasm. The catalysed reaction is N(6)-dimethylallyladenosine(37) in tRNA + (sulfur carrier)-SH + AH2 + 2 S-adenosyl-L-methionine = 2-methylsulfanyl-N(6)-dimethylallyladenosine(37) in tRNA + (sulfur carrier)-H + 5'-deoxyadenosine + L-methionine + A + S-adenosyl-L-homocysteine + 2 H(+). Its function is as follows. Catalyzes the methylthiolation of N6-(dimethylallyl)adenosine (i(6)A), leading to the formation of 2-methylthio-N6-(dimethylallyl)adenosine (ms(2)i(6)A) at position 37 in tRNAs that read codons beginning with uridine. The protein is tRNA-2-methylthio-N(6)-dimethylallyladenosine synthase of Burkholderia lata (strain ATCC 17760 / DSM 23089 / LMG 22485 / NCIMB 9086 / R18194 / 383).